Here is a 295-residue protein sequence, read N- to C-terminus: Glutamyl-Q tRNA(Asp) synthetase (295 aa).

Residues 9-13 (RFAPT) and Glu45 each bind L-glutamate. A 'HIGH' region motif is present at residues 12-22 (PTPSGFLHFGS). 4 residues coordinate Zn(2+): Cys101, Cys103, Tyr115, and Cys119. Tyr172 and Arg190 together coordinate L-glutamate. The 'KMSKS' region motif lies at 228–232 (KLGKS). Residue Lys231 coordinates ATP.

The protein belongs to the class-I aminoacyl-tRNA synthetase family. GluQ subfamily. Zn(2+) is required as a cofactor.

Catalyzes the tRNA-independent activation of glutamate in presence of ATP and the subsequent transfer of glutamate onto a tRNA(Asp). Glutamate is transferred on the 2-amino-5-(4,5-dihydroxy-2-cyclopenten-1-yl) moiety of the queuosine in the wobble position of the QUC anticodon. This chain is Glutamyl-Q tRNA(Asp) synthetase, found in Pseudomonas putida (strain W619).